A 432-amino-acid polypeptide reads, in one-letter code: Adenylosuccinate synthetase (432 aa).

GTP contacts are provided by residues 13-19 (GDEGKGK) and 41-43 (GHT). Aspartate 14 (proton acceptor) is an active-site residue. Residues aspartate 14 and glycine 41 each contribute to the Mg(2+) site. IMP contacts are provided by residues 14 to 17 (DEGK), 39 to 42 (NAGH), threonine 130, arginine 144, glutamine 225, threonine 240, and arginine 304. Histidine 42 (proton donor) is an active-site residue. A substrate-binding site is contributed by 300–306 (ATTGRRR). GTP-binding positions include arginine 306, 332 to 334 (KLD), and 415 to 417 (STG).

Belongs to the adenylosuccinate synthetase family. Homodimer. Mg(2+) is required as a cofactor.

The protein localises to the cytoplasm. It catalyses the reaction IMP + L-aspartate + GTP = N(6)-(1,2-dicarboxyethyl)-AMP + GDP + phosphate + 2 H(+). Its pathway is purine metabolism; AMP biosynthesis via de novo pathway; AMP from IMP: step 1/2. In terms of biological role, plays an important role in the de novo pathway of purine nucleotide biosynthesis. Catalyzes the first committed step in the biosynthesis of AMP from IMP. This Salmonella paratyphi C (strain RKS4594) protein is Adenylosuccinate synthetase.